The primary structure comprises 359 residues: DNA integrity scanning protein DisA (359 aa).

Positions 7 to 146 (DDIFRATLAA…GRRYVLDGSA (140 aa)) constitute a DAC domain. ATP contacts are provided by residues Gly-74, Leu-92, and 105-109 (TRHRT).

This sequence belongs to the DisA family. In terms of assembly, homooctamer. Requires Mg(2+) as cofactor.

The enzyme catalyses 2 ATP = 3',3'-c-di-AMP + 2 diphosphate. Participates in a DNA-damage check-point that is active prior to asymmetric division when DNA is damaged. DisA forms globular foci that rapidly scan along the chromosomes during sporulation, searching for lesions. When a lesion is present, DisA pauses at the lesion site. This triggers a cellular response that culminates in a temporary block in sporulation initiation. In terms of biological role, also has diadenylate cyclase activity, catalyzing the condensation of 2 ATP molecules into cyclic di-AMP (c-di-AMP). c-di-AMP acts as a signaling molecule that couples DNA integrity with progression of sporulation. The rise in c-di-AMP level generated by DisA while scanning the chromosome, operates as a positive signal that advances sporulation; upon encountering a lesion, the DisA focus arrests at the damaged site and halts c-di-AMP synthesis. The sequence is that of DNA integrity scanning protein DisA from Frankia casuarinae (strain DSM 45818 / CECT 9043 / HFP020203 / CcI3).